Reading from the N-terminus, the 354-residue chain is MIKIYRMKFKKFVFKFIDHDKRNFTVVCVNVYANKATHEFAHDNDFSKKLEWKIKHFKHAHALERRIHQLVKETYFRESTGSLDQFADFKSVKVCVKDKIVKINLGENQEGNPVYKQVKSVSKHYHVFVRGTKPLNRREKGAYTHSMKVHDIHLTGNLDQGLEFAELCNFSIPESGIHSVQSQSSVTQSLNGQNVNPGAVVTGGDNWLSATNNANWNSTANTNAAWNSMNRNSVAQNSASKNANNWNSAANSAVKSSQNNNLSAMNNSLYNNNKAVNTNTINSTNNRNVSSQNNANRNASMATTYNNSVNSANSINTANTRSQTGGQDEEDFEKKYKKYKNKYAKLKNQKTSNF.

Residues valine 309 to glycine 326 show a composition bias toward polar residues. Residues valine 309 to glutamate 333 form a disordered region. Residues glycine 326 to asparagine 353 are a coiled coil.

Its subcellular location is the virion. This is an uncharacterized protein from Acanthamoeba polyphaga (Amoeba).